A 142-amino-acid chain; its full sequence is Ribonuclease VapC31 (142 aa).

Residues 3-139 (LLDANVLLAA…ARFASVRHIR (137 aa)) form the PINc domain. Mg(2+) contacts are provided by Asp-5 and Asp-108.

This sequence belongs to the PINc/VapC protein family. Requires Mg(2+) as cofactor.

Functionally, toxic component of a type II toxin-antitoxin (TA) system. An RNase. Its toxic effect is neutralized by coexpression with cognate antitoxin VapB31. The polypeptide is Ribonuclease VapC31 (Mycobacterium tuberculosis (strain CDC 1551 / Oshkosh)).